The following is a 360-amino-acid chain: Isocitrate dehydrogenase [NAD] subunit 1, mitochondrial (360 aa).

A mitochondrion-targeting transit peptide spans 1–11 (MLNRTIAKRTL). Substrate-binding residues include arginine 109, arginine 140, and aspartate 228. Residue aspartate 228 coordinates Mg(2+).

Belongs to the isocitrate and isopropylmalate dehydrogenases family. In terms of assembly, octamer of two non-identical subunits IDH1 and IDH2. It depends on Mg(2+) as a cofactor. The cofactor is Mn(2+).

It is found in the mitochondrion. It catalyses the reaction D-threo-isocitrate + NAD(+) = 2-oxoglutarate + CO2 + NADH. Allosterically regulated by several compounds including AMP, NAD(+), and citrate. Functionally, performs an essential role in the oxidative function of the citric acid cycle. Also binds RNA; specifically to the 5'-untranslated leaders of mitochondrial mRNAs. This chain is Isocitrate dehydrogenase [NAD] subunit 1, mitochondrial (IDH1), found in Saccharomyces cerevisiae (strain ATCC 204508 / S288c) (Baker's yeast).